Reading from the N-terminus, the 477-residue chain is Bifunctional protein HldE (477 aa).

The tract at residues 1-318 (MKVTLPEFER…ENAVRGRADT (318 aa)) is ribokinase. Lys179 bears the N6-acetyllysine mark. Residue 195–198 (NLSE) participates in ATP binding. Residue Asp264 is part of the active site. Positions 344–477 (MTNGVFDILH…IKKIQQDKKG (134 aa)) are cytidylyltransferase.

This sequence in the N-terminal section; belongs to the carbohydrate kinase PfkB family. The protein in the C-terminal section; belongs to the cytidylyltransferase family. In terms of assembly, homodimer.

It carries out the reaction D-glycero-beta-D-manno-heptose 7-phosphate + ATP = D-glycero-beta-D-manno-heptose 1,7-bisphosphate + ADP + H(+). It catalyses the reaction D-glycero-beta-D-manno-heptose 1-phosphate + ATP + H(+) = ADP-D-glycero-beta-D-manno-heptose + diphosphate. It functions in the pathway nucleotide-sugar biosynthesis; ADP-L-glycero-beta-D-manno-heptose biosynthesis; ADP-L-glycero-beta-D-manno-heptose from D-glycero-beta-D-manno-heptose 7-phosphate: step 1/4. The protein operates within nucleotide-sugar biosynthesis; ADP-L-glycero-beta-D-manno-heptose biosynthesis; ADP-L-glycero-beta-D-manno-heptose from D-glycero-beta-D-manno-heptose 7-phosphate: step 3/4. Functionally, catalyzes the phosphorylation of D-glycero-D-manno-heptose 7-phosphate at the C-1 position to selectively form D-glycero-beta-D-manno-heptose-1,7-bisphosphate. Its function is as follows. Catalyzes the ADP transfer from ATP to D-glycero-beta-D-manno-heptose 1-phosphate, yielding ADP-D-glycero-beta-D-manno-heptose. This chain is Bifunctional protein HldE, found in Escherichia coli O17:K52:H18 (strain UMN026 / ExPEC).